The following is a 512-amino-acid chain: Hyaluronidase PH-20 (512 aa).

Residues 1–35 form the signal peptide; it reads MGELQFKWLFWRSFAESGGTFQTVLIFLFIPYSLT. Disulfide bonds link C60/C351 and C223/C237. A glycan (N-linked (GlcNAc...) asparagine) is linked at N63. E147 (proton donor) is an active-site residue. 2 N-linked (GlcNAc...) asparagine glycosylation sites follow: N165 and N179. N368 carries N-linked (GlcNAc...) asparagine glycosylation. 3 disulfides stabilise this stretch: C376–C387, C381–C435, and C437–C464. Residue N408 is glycosylated (N-linked (GlcNAc...) asparagine).

The protein belongs to the glycosyl hydrolase 56 family.

It localises to the cell membrane. The enzyme catalyses Random hydrolysis of (1-&gt;4)-linkages between N-acetyl-beta-D-glucosamine and D-glucuronate residues in hyaluronate.. Functionally, involved in sperm-egg adhesion. Upon fertilization sperm must first penetrate a layer of cumulus cells that surrounds the egg before reaching the zona pellucida. The cumulus cells are embedded in a matrix containing hyaluronic acid which is formed prior to ovulation. This protein aids in penetrating the layer of cumulus cells by digesting hyaluronic acid. This Rattus norvegicus (Rat) protein is Hyaluronidase PH-20 (Spam1).